Consider the following 676-residue polypeptide: DNA ligase (676 aa).

NAD(+)-binding positions include 34-38, 84-85, and E116; these read DAEYD and SL. Catalysis depends on K118, which acts as the N6-AMP-lysine intermediate. Positions 139, 174, 294, and 318 each coordinate NAD(+). Zn(2+) contacts are provided by C412, C415, C428, and C433. Positions 589–676 constitute a BRCT domain; that stretch reads KGGEALKGLT…RTGKKAEELV (88 aa).

Belongs to the NAD-dependent DNA ligase family. LigA subfamily. The cofactor is Mg(2+). Mn(2+) serves as cofactor.

It carries out the reaction NAD(+) + (deoxyribonucleotide)n-3'-hydroxyl + 5'-phospho-(deoxyribonucleotide)m = (deoxyribonucleotide)n+m + AMP + beta-nicotinamide D-nucleotide.. Its function is as follows. DNA ligase that catalyzes the formation of phosphodiester linkages between 5'-phosphoryl and 3'-hydroxyl groups in double-stranded DNA using NAD as a coenzyme and as the energy source for the reaction. It is essential for DNA replication and repair of damaged DNA. This chain is DNA ligase, found in Thermus thermophilus (strain ATCC BAA-163 / DSM 7039 / HB27).